We begin with the raw amino-acid sequence, 946 residues long: Rho GTPase-activating protein 4 (946 aa).

Positions 19 to 317 (TQVKEMRWQL…AVEALDPPGD (299 aa)) constitute an F-BAR domain. Residues 128–195 (LAQRLSHIAE…REAERQEEKR (68 aa)) are a coiled coil. The span at 187–196 (EAERQEEKRA) shows a compositional bias: basic and acidic residues. 2 disordered regions span residues 187-220 (EAER…SLKK) and 402-435 (LDSF…QQQE). 2 stretches are compositionally biased toward low complexity: residues 202 to 211 (TTTAGATEAG) and 407 to 419 (TSPS…STSS). A Rho-GAP domain is found at 507 to 695 (GDMEKFIQSS…TLIVQPDRVF (189 aa)). The 60-residue stretch at 746 to 805 (EGVVEAVACFAYTGRTAQELSFRRGDVLRLHERASSDWWRGEHNGMRGLIPHKYITLPAG) folds into the SH3 domain. A phosphoserine mark is found at Ser-860, Ser-901, and Ser-906. Residues 885-946 (KTSVRQGLGP…QGLDTTPKPH (62 aa)) are disordered. Residues 901-910 (SPGPRSPKAP) are compositionally biased toward pro residues. Positions 924–934 (GPGAPASPSAS) are enriched in low complexity.

As to quaternary structure, interacts with NCKAP1L. Predominantly in hematopoietic cells (spleen, thymus and leukocytes); low levels in placenta, lung and various fetal tissues.

Its subcellular location is the cytoplasm. Its function is as follows. Inhibitory effect on stress fiber organization. May down-regulate Rho-like GTPase in hematopoietic cells. This chain is Rho GTPase-activating protein 4, found in Homo sapiens (Human).